A 213-amino-acid polypeptide reads, in one-letter code: Large ribosomal subunit protein uL3 (213 aa).

This sequence belongs to the universal ribosomal protein uL3 family. In terms of assembly, part of the 50S ribosomal subunit. Forms a cluster with proteins L14 and L19.

One of the primary rRNA binding proteins, it binds directly near the 3'-end of the 23S rRNA, where it nucleates assembly of the 50S subunit. The polypeptide is Large ribosomal subunit protein uL3 (Kosmotoga olearia (strain ATCC BAA-1733 / DSM 21960 / TBF 19.5.1)).